The primary structure comprises 141 residues: MRQRTIVCPLIQNDGAYLLCKMADDRGVFPGQWALSGGGVEPGERIEEALRREIREELGEQLLLTEITPWTFSDDIRTKTYADGRKEEIYMIYLIFDCVSANREVKINEEFQDYAWVKPEDLVHYDLNVATRKTLRLKGLL.

The Nudix hydrolase domain maps to 1–141; sequence MRQRTIVCPL…RKTLRLKGLL (141 aa). Positions 38–59 match the Nudix box motif; it reads GGVEPGERIEEALRREIREELG.

It belongs to the Nudix hydrolase family. NudI subfamily. In terms of assembly, monomer. Mg(2+) serves as cofactor.

The catalysed reaction is a ribonucleoside 5'-triphosphate + H2O = a ribonucleoside 5'-phosphate + diphosphate + H(+). It catalyses the reaction a 2'-deoxyribonucleoside 5'-triphosphate + H2O = a 2'-deoxyribonucleoside 5'-phosphate + diphosphate + H(+). The enzyme catalyses dUTP + H2O = dUMP + diphosphate + H(+). It carries out the reaction dTTP + H2O = dTMP + diphosphate + H(+). The catalysed reaction is dCTP + H2O = dCMP + diphosphate + H(+). Functionally, catalyzes the hydrolysis of nucleoside triphosphates, with a preference for pyrimidine deoxynucleoside triphosphates (dUTP, dTTP and dCTP). The chain is Nucleoside triphosphatase NudI from Escherichia coli O9:H4 (strain HS).